Here is a 370-residue protein sequence, read N- to C-terminus: Dual-specificity RNA methyltransferase RlmN (370 aa).

Glu-93 functions as the Proton acceptor in the catalytic mechanism. Residues 99-337 enclose the Radical SAM core domain; the sequence is AEGRGTLCVS…VTTVRKTRGD (239 aa). An intrachain disulfide couples Cys-106 to Cys-343. Cys-113, Cys-117, and Cys-120 together coordinate [4Fe-4S] cluster. S-adenosyl-L-methionine-binding positions include 167–168, Ser-199, 221–223, and Asn-300; these read GE and SLH. Catalysis depends on Cys-343, which acts as the S-methylcysteine intermediate.

The protein belongs to the radical SAM superfamily. RlmN family. Requires [4Fe-4S] cluster as cofactor.

It is found in the cytoplasm. It catalyses the reaction adenosine(2503) in 23S rRNA + 2 reduced [2Fe-2S]-[ferredoxin] + 2 S-adenosyl-L-methionine = 2-methyladenosine(2503) in 23S rRNA + 5'-deoxyadenosine + L-methionine + 2 oxidized [2Fe-2S]-[ferredoxin] + S-adenosyl-L-homocysteine. It carries out the reaction adenosine(37) in tRNA + 2 reduced [2Fe-2S]-[ferredoxin] + 2 S-adenosyl-L-methionine = 2-methyladenosine(37) in tRNA + 5'-deoxyadenosine + L-methionine + 2 oxidized [2Fe-2S]-[ferredoxin] + S-adenosyl-L-homocysteine. Functionally, specifically methylates position 2 of adenine 2503 in 23S rRNA and position 2 of adenine 37 in tRNAs. m2A2503 modification seems to play a crucial role in the proofreading step occurring at the peptidyl transferase center and thus would serve to optimize ribosomal fidelity. The protein is Dual-specificity RNA methyltransferase RlmN of Francisella tularensis subsp. tularensis (strain FSC 198).